A 928-amino-acid polypeptide reads, in one-letter code: Neuropilin-1 (928 aa).

Positions 1–21 are cleaved as a signal peptide; the sequence is MLLRLLSCCCWLLCSLRSSWA. The Extracellular portion of the chain corresponds to 22 to 860; the sequence is SRNDKCGDTI…PGNVLKTLDP (839 aa). Disulfide bonds link C27-C54, C82-C104, and C147-C173. CUB domains lie at 27 to 141 and 147 to 265; these read CGDT…YEVF and CSRN…FSVV. N150 is a glycosylation site (N-linked (GlcNAc...) asparagine). Residues E195, D209, and D250 each contribute to the Ca(2+) site. C206 and C228 are oxidised to a cystine. N-linked (GlcNAc...) asparagine glycans are attached at residues N261, N300, and N523. 2 cysteine pairs are disulfide-bonded: C275–C424 and C431–C584. F5/8 type C domains follow at residues 275 to 424 and 431 to 584; these read CKEA…LYGC and CSRM…LLGC. The O-linked (Xyl...) (chondroitin sulfate) serine; alternate glycan is linked to S613. Residue S613 is glycosylated (O-linked (Xyl...) (heparan sulfate) serine; alternate). Residues 624 to 645 are disordered; the sequence is GATGQSTETPTVEASPEEPDMT. Residues 625–635 are compositionally biased toward polar residues; it reads ATGQSTETPTV. The MAM domain occupies 646–812; that stretch reads HSDLDCKFGW…NHISPSQCRA (167 aa). Residue S834 is glycosylated (O-linked (Xyl...) (chondroitin sulfate) serine). N-linked (GlcNAc...) asparagine glycosylation occurs at N844. The chain crosses the membrane as a helical span at residues 861 to 883; it reads ILITIIAMSALGVLLGAICGVVL. Over 884-928 the chain is Cytoplasmic; sequence YCACWHNGMSERNLSALENYNFELVDGVKLKKDKLNTQNSYSEAS.

The protein belongs to the neuropilin family. Homodimer, and heterodimer. As to expression, retinal ganglion cells and visual center neurons.

The protein resides in the mitochondrion membrane. Its subcellular location is the cell membrane. In terms of biological role, receptor involved in the development of the cardiovascular system, in angiogenesis, in the formation of certain neuronal circuits and in organogenesis outside the nervous system. Mediates the chemorepulsant activity of semaphorins. Binding to VEGFA initiates a signaling pathway needed for motor neuron axon guidance and cell body migration, including for the caudal migration of facial motor neurons from rhombomere 4 to rhombomere 6 during embryonic development. Regulates mitochondrial iron transport via interaction. This is Neuropilin-1 (nrp1) from Xenopus laevis (African clawed frog).